The chain runs to 261 residues: 5'-nucleotidase SurE (261 aa).

A divalent metal cation is bound by residues Asp8, Asp9, Ser40, and Asn94.

This sequence belongs to the SurE nucleotidase family. Requires a divalent metal cation as cofactor.

The protein localises to the cytoplasm. It catalyses the reaction a ribonucleoside 5'-phosphate + H2O = a ribonucleoside + phosphate. Its function is as follows. Nucleotidase that shows phosphatase activity on nucleoside 5'-monophosphates. The chain is 5'-nucleotidase SurE from Anaplasma marginale (strain St. Maries).